Consider the following 201-residue polypeptide: Regulator of G-protein signaling 1 (201 aa).

Positions 75–191 (SLEKLLISED…LKSEIFLRLA (117 aa)) constitute an RGS domain.

The protein localises to the cell membrane. The protein resides in the cytoplasm. It is found in the cytosol. Functionally, regulates G protein-coupled receptor signaling cascades, including signaling downstream of the N-formylpeptide chemoattractant receptors and leukotriene receptors. Inhibits B cell chemotaxis. Inhibits signal transduction by increasing the GTPase activity of G protein alpha subunits, thereby driving them into their inactive GDP-bound form. The polypeptide is Regulator of G-protein signaling 1 (rgs1) (Xenopus tropicalis (Western clawed frog)).